An 88-amino-acid polypeptide reads, in one-letter code: Synaptonemal complex central element protein 3 (88 aa).

A coiled-coil region spans residues 8-75 (ERSYDNMLKM…FLNCKEEMEK (68 aa)).

In terms of assembly, homodimer. Can form higher-order homooligomers. Interacts with SYCP1 (via tetrameric core); the interaction remodels SYCP1 homotetramers to 2:1 heterotrimers with SYCE3. SYCP1/SYCE3 heterotrimers form lattice assemblies as part of the mature synaptonemal complex via both lateral and head-to-head interactions. Interacts with the SYCE1-SIX6OS1 complex; the interaction recruits the SYCE1-SIX6OS1 complex to the central element of the synaptonemal complex. Interacts with the SYCE2-TEX12 complex; the interaction promotes fibrous assembly of SYCE2-TEX12 as part of the synaptonemal complex central element. Interacts with SYCE1. Interacts with SYCE2. Interacts with proteasome subunit PSMA8; to participate in meiosis progression during spermatogenesis. Interacts with SPO16. Expression is restricted to spermatocytes and is absent in spermatogonia, spermatids and spermatogonia (at protein level). Expressed in adult testis and embryonic ovary. Expressed in the convoluted seminiferous tubules in spermatogonia and spermatocytes.

It is found in the nucleus. The protein localises to the chromosome. Functionally, major component of the transverse central element of synaptonemal complexes (SCS), formed between homologous chromosomes during meiotic prophase. Required for the assembly of the central element of the synaptonemal complex during meiosis, via remodeling of SYCP1 lattice structures and promoting recruitment of SYCE2-TEX12 and SYCE1-SIX60S1 complexes. Required for chromosome loading of the central element-specific SCS proteins, and for initiating synapsis between homologous chromosomes. Chromosome loading appears to require SYCP1. Required for fertility and normal testis development. May play a role in apoptosis of spermatogenic cells and pathogenesis of cryptorchidism. In Mus musculus (Mouse), this protein is Synaptonemal complex central element protein 3.